Here is a 432-residue protein sequence, read N- to C-terminus: Lipid-A-disaccharide synthase (432 aa).

Polar residues predominate over residues Met-1–Ile-11. Residues Met-1–Leu-35 are disordered.

This sequence belongs to the LpxB family.

It catalyses the reaction a lipid X + a UDP-2-N,3-O-bis[(3R)-3-hydroxyacyl]-alpha-D-glucosamine = a lipid A disaccharide + UDP + H(+). It participates in bacterial outer membrane biogenesis; LPS lipid A biosynthesis. Condensation of UDP-2,3-diacylglucosamine and 2,3-diacylglucosamine-1-phosphate to form lipid A disaccharide, a precursor of lipid A, a phosphorylated glycolipid that anchors the lipopolysaccharide to the outer membrane of the cell. This chain is Lipid-A-disaccharide synthase, found in Xanthomonas oryzae pv. oryzae (strain MAFF 311018).